Reading from the N-terminus, the 451-residue chain is Sex peptide receptor-related protein 2 (451 aa).

Topologically, residues 1–63 are extracellular; that stretch reads MNYEVYCGNA…DNLEIVVYGQ (63 aa). Residue Asn-15 is glycosylated (N-linked (GlcNAc...) asparagine). A helical membrane pass occupies residues 64–84; it reads IFPILVLFAVFANAAVALVLS. Residues 85 to 97 lie on the Cytoplasmic side of the membrane; that stretch reads KKHMITPTNVVLK. Residues 98–118 traverse the membrane as a helical segment; the sequence is YMAIAELLVGLVPLPWTLFFF. At 119-140 the chain is on the extracellular side; sequence SMGNIKETHRLELWWCYLQKYS. Residues Cys-134 and Cys-225 are joined by a disulfide bond. Residues 141–161 traverse the membrane as a helical segment; that stretch reads MDAFPPVFHMIAMWLTVLLAA. The Cytoplasmic portion of the chain corresponds to 162-183; that stretch reads QRYVSISHPLHSRSACNVKNVR. The helical transmembrane segment at 184 to 204 threads the bilayer; it reads LATMIITVTSFLCGLPKSFDY. The Extracellular portion of the chain corresponds to 205-251; that stretch reads EYETVHGWIYSHGNWTYASSCVMMPTAILTNMGQTVYFNIYFWTRAL. N-linked (GlcNAc...) asparagine glycosylation is present at Asn-218. Residues 252 to 272 traverse the membrane as a helical segment; the sequence is GFIILPSFLLVLLNGLLIKGI. The Cytoplasmic portion of the chain corresponds to 273–301; that stretch reads RRAQRRKLRLLREKRSEEAARQRDSNSTS. Residues 302-322 traverse the membrane as a helical segment; it reads LMLVAIVSIFLIVNLPQAIFM. Over 323–334 the chain is Extracellular; the sequence is GLLCVCETFTIK. The helical transmembrane segment at 335 to 355 threads the bilayer; sequence IPILEGTFPAVFLIASNMIVI. Over 356-451 the chain is Cytoplasmic; that stretch reads ATYPINFGIY…TQFTTMDRSD (96 aa).

This sequence belongs to the G-protein coupled receptor 1 family. In terms of tissue distribution, expressed in head neurons including the ASE sensory neurons and the ASI and AWB chemosensory neurons, the midbody neurons SDQ, and motor neurons in the tail.

The protein resides in the cell membrane. Functionally, G-protein coupled receptor for the neuropeptide like protein nlp-38. Plays a role in several types of aversive gustatory associative learning including gustatory plasticity and salt avoidance learning. Its role in salt avoidance learning may be through activation of the transcription factor crh-1/CREB and de novo transcription and translation, which in turn promotes the formation of long-term memory. The polypeptide is Sex peptide receptor-related protein 2 (Caenorhabditis elegans).